The following is a 1021-amino-acid chain: Ribosome quality control complex subunit 2 (1021 aa).

Positions 348–388 (IEAQKLKKRAHDRLATAERRLESAKEDQARKLQSLQDAQAT) form a coiled coil. The disordered stretch occupies residues 457–484 (NPESVDNSDESSETSDDDLDDSDDDNKV). Residues 462-480 (DNSDESSETSDDDLDDSDD) show a composition bias toward acidic residues. Phosphoserine is present on S478. 2 coiled-coil regions span residues 507-546 (NARK…DLKR) and 698-727 (DEKS…LKME). 2 stretches are compositionally biased toward polar residues: residues 746 to 761 (YNED…TTGS) and 839 to 856 (ISSQ…TPTA). Disordered stretches follow at residues 746-801 (YNED…TALE) and 832-905 (HAAR…VESF). The span at 876–905 (DQSRNSEAENEKGLSTEQRDEKKHAKVESF) shows a compositional bias: basic and acidic residues.

It belongs to the NEMF family. In terms of assembly, component of the ribosome quality control complex (RQC), composed of the E3 ubiquitin ligase rkr1/ltn1, rqc1 and mtr1/rqc2, as well as cdc48 and its ubiquitin-binding cofactors associated with the 60S ribosomal subunit. RQC2 binds to the 40S-binding surface of tRNAs.

It is found in the cytoplasm. Its function is as follows. Key component of the ribosome quality control complex (RQC), a ribosome-associated complex that mediates the extraction of incompletely synthesized nascent chains from stalled ribosomes as well as their ubiquitin-mediated proteasomal degradation. Thereby, frees 60S subunit ribosomes from the stalled translation complex and prevents the accumulation of nascent polypeptide chains that are potentially toxic for the cell. Within the RQC complex, mtr1/rqc2 specifically binds stalled 60S ribosomal subunits by recognizing an exposed, nascent chain-conjugated tRNA moiety and promotes the recruitment of rkr1/ltn1 to stalled 60S subunits. Following binding to stalled 60S ribosomal subunits, mtr1/rqc2 mediates CAT tailing by recruiting alanine- and threonine-charged tRNA to the A-site and directing the elongation of stalled nascent chains independently of mRNA or 40S subunits, leading to non-templated C-terminal Ala and Thr extensions (CAT tails). CAT tails promote the rkr1/ltn1-mediated ubiquitination of incompletely synthesized nascent polypeptides: CAT tailing facilitates rkr1/ltn1-dependent ubiquitination by exposing lysine residues that would otherwise remain buried in the ribosomal exit tunnel. Following ubiquitination, incompletely synthesized nascent polypeptides are recognized by CDC48 and degraded by the proteasome. CAT-tailed proteins tend to aggregate and sequester chaperones and can induce proteotoxic stress; their rkr1/ltn1-dependent ubiquitination and degradation is required to prevent proteotoxic stress. The protein is Ribosome quality control complex subunit 2 of Schizosaccharomyces pombe (strain 972 / ATCC 24843) (Fission yeast).